Here is a 369-residue protein sequence, read N- to C-terminus: Glutamate 5-kinase (369 aa).

Residue Lys9 participates in ATP binding. 3 residues coordinate substrate: Ser49, Asp136, and Asn148. Residues 168–169 (TD) and 210–216 (TGGMLTK) contribute to the ATP site. Residues 275–355 (QGEIYVDQGA…KGVVIHRDDW (81 aa)) form the PUA domain.

This sequence belongs to the glutamate 5-kinase family.

Its subcellular location is the cytoplasm. It carries out the reaction L-glutamate + ATP = L-glutamyl 5-phosphate + ADP. Its pathway is amino-acid biosynthesis; L-proline biosynthesis; L-glutamate 5-semialdehyde from L-glutamate: step 1/2. In terms of biological role, catalyzes the transfer of a phosphate group to glutamate to form L-glutamate 5-phosphate. This Streptococcus sanguinis (strain SK36) protein is Glutamate 5-kinase.